A 460-amino-acid chain; its full sequence is Histidinol dehydrogenase (460 aa).

Ser-269, Gln-291, and His-294 together coordinate substrate. 2 residues coordinate Zn(2+): Gln-291 and His-294. Residues Glu-358 and His-359 each act as proton acceptor in the active site. His-359, Asp-392, Glu-446, and His-451 together coordinate substrate. Asp-392 contributes to the Zn(2+) binding site. Position 451 (His-451) interacts with Zn(2+).

Belongs to the histidinol dehydrogenase family. Requires Zn(2+) as cofactor.

It carries out the reaction L-histidinol + 2 NAD(+) + H2O = L-histidine + 2 NADH + 3 H(+). It participates in amino-acid biosynthesis; L-histidine biosynthesis; L-histidine from 5-phospho-alpha-D-ribose 1-diphosphate: step 9/9. Functionally, catalyzes the sequential NAD-dependent oxidations of L-histidinol to L-histidinaldehyde and then to L-histidine. The sequence is that of Histidinol dehydrogenase from Rhodopirellula baltica (strain DSM 10527 / NCIMB 13988 / SH1).